The following is a 169-amino-acid chain: S-ribosylhomocysteine lyase (169 aa).

Residues H54, H58, and C128 each contribute to the Fe cation site.

The protein belongs to the LuxS family. As to quaternary structure, homodimer. It depends on Fe cation as a cofactor.

The enzyme catalyses S-(5-deoxy-D-ribos-5-yl)-L-homocysteine = (S)-4,5-dihydroxypentane-2,3-dione + L-homocysteine. Involved in the synthesis of autoinducer 2 (AI-2) which is secreted by bacteria and is used to communicate both the cell density and the metabolic potential of the environment. The regulation of gene expression in response to changes in cell density is called quorum sensing. Catalyzes the transformation of S-ribosylhomocysteine (RHC) to homocysteine (HC) and 4,5-dihydroxy-2,3-pentadione (DPD). This is S-ribosylhomocysteine lyase from Psychromonas ingrahamii (strain DSM 17664 / CCUG 51855 / 37).